The following is a 248-amino-acid chain: E3 SUMO-protein ligase NSE2 (248 aa).

Residue M1 is modified to N-acetylmethionine. Glycyl lysine isopeptide (Lys-Gly) (interchain with G-Cter in SUMO2) cross-links involve residues K92 and K109. Phosphoserine is present on S118. Glycyl lysine isopeptide (Lys-Gly) (interchain with G-Cter in SUMO2) cross-links involve residues K127 and K132. The SP-RING-type zinc finger occupies 156 to 242; it reads VDEDMIVTQS…LRRAIESHKK (87 aa). Residues C187, H189, C212, and C217 each contribute to the Zn(2+) site.

It belongs to the NSE2 family. Component of the SMC5-SMC6 complex which consists at least of SMC5, SMC6, NSMCE2, NSMCE1, NSMCE4A or EID3 and NSMCE3. In terms of processing, sumoylated, possibly via autosumoylation.

The protein resides in the nucleus. Its subcellular location is the chromosome. It is found in the telomere. It localises to the PML body. It participates in protein modification; protein sumoylation. Its function is as follows. E3 SUMO-protein ligase component of the SMC5-SMC6 complex, a complex involved in DNA double-strand break repair by homologous recombination. Is not be required for the stability of the complex. The complex may promote sister chromatid homologous recombination by recruiting the SMC1-SMC3 cohesin complex to double-strand breaks. Acts as an E3 ligase mediating SUMO attachment to various proteins such as SMC6L1 and TSNAX, the shelterin complex subunits TERF1, TERF2, TINF2 and TERF2IP, RAD51AP1, and maybe the cohesin components RAD21 and STAG2. Required for recruitment of telomeres to PML nuclear bodies. Required for sister chromatid cohesion during prometaphase and mitotic progression. This Bos taurus (Bovine) protein is E3 SUMO-protein ligase NSE2 (NSMCE2).